A 460-amino-acid chain; its full sequence is GTPase Der (460 aa).

2 consecutive EngA-type G domains span residues 21–187 (PRVV…FSVD) and 198–373 (VRLA…AQLN). GTP is bound by residues 27–34 (GRPNVGKS), 74–78 (DTSGF), 141–144 (NKTE), 204–211 (GKPNTGKS), 251–255 (DTAGI), and 316–319 (NKWD). The region spanning 374–457 (TKVETSALNT…PVKLTIRKNC (84 aa)) is the KH-like domain.

Belongs to the TRAFAC class TrmE-Era-EngA-EngB-Septin-like GTPase superfamily. EngA (Der) GTPase family. Associates with the 50S ribosomal subunit.

In terms of biological role, GTPase that plays an essential role in the late steps of ribosome biogenesis. The polypeptide is GTPase Der (Treponema pallidum subsp. pallidum (strain SS14)).